The primary structure comprises 153 residues: Ribosomal RNA large subunit methyltransferase H (153 aa).

Residues Leu70, Gly102, and 121–126 (LSRMTF) each bind S-adenosyl-L-methionine.

It belongs to the RNA methyltransferase RlmH family. As to quaternary structure, homodimer.

The protein localises to the cytoplasm. It carries out the reaction pseudouridine(1915) in 23S rRNA + S-adenosyl-L-methionine = N(3)-methylpseudouridine(1915) in 23S rRNA + S-adenosyl-L-homocysteine + H(+). Specifically methylates the pseudouridine at position 1915 (m3Psi1915) in 23S rRNA. The chain is Ribosomal RNA large subunit methyltransferase H from Geobacter sulfurreducens (strain ATCC 51573 / DSM 12127 / PCA).